Here is a 37-residue protein sequence, read N- to C-terminus: Serrulin (37 aa).

The interval 16–37 (FGGGGIGGGGFGGGYGGGKIKG) is disordered. Lysine 36 is subject to Lysine amide.

As to expression, expressed in hemocytes (at protein level).

It localises to the secreted. Antimicrobial protein with activity against Gram-positive and Gram-negative bacteria, filamentous fungus, and yeast. Was tested against Micrococcus luteus A270 (MIC=0.5-1 uM), Echerichia coli SBS 363 (MIC=9-16 uM), Pseudomonas aeruginosa (MIC=0.01-0.3 uM), Aspergillus niger (MIC=3-6 uM), and Candida albicans MDM8 (MIC=1.5-3 uM). Has no hemolytic activity against human erythrocytes. The polypeptide is Serrulin (Tityus serrulatus (Brazilian scorpion)).